Reading from the N-terminus, the 769-residue chain is Cullin-3 (769 aa).

Positions 614–655 (DRELPSTTSSTTTTTTTATSSSTSTSPSSSSSSISTPTPSKS) are disordered. A compositionally biased stretch (low complexity) spans 618 to 653 (PSTTSSTTTTTTTATSSSTSTSPSSSSSSISTPTPS). One can recognise a Cullin neddylation domain in the interval 699-761 (DRKHQIEASI…REYLERSKQD (63 aa)). K713 participates in a covalent cross-link: Glycyl lysine isopeptide (Lys-Gly) (interchain with G-Cter in NEDD8).

Belongs to the cullin family. In terms of processing, neddylated. Deneddylated via its interaction with the COP9 signalosome (CSN) complex.

Its subcellular location is the nucleus. It functions in the pathway protein modification; protein ubiquitination. In terms of biological role, probable core component of cullin-based SCF-like E3 ubiquitin-protein ligase complexes which mediate the ubiquitination and subsequent proteasomal degradation of target proteins. The E3 ubiquitin-protein ligase activity of the complex is dependent on the neddylation of the cullin subunit. The sequence is that of Cullin-3 (culC) from Dictyostelium discoideum (Social amoeba).